The sequence spans 277 residues: Tryptophan synthase alpha chain (277 aa).

Active-site proton acceptor residues include glutamate 43 and glutamate 54.

The protein belongs to the TrpA family. In terms of assembly, tetramer of two alpha and two beta chains.

The enzyme catalyses (1S,2R)-1-C-(indol-3-yl)glycerol 3-phosphate + L-serine = D-glyceraldehyde 3-phosphate + L-tryptophan + H2O. Its pathway is amino-acid biosynthesis; L-tryptophan biosynthesis; L-tryptophan from chorismate: step 5/5. Functionally, the alpha subunit is responsible for the aldol cleavage of indoleglycerol phosphate to indole and glyceraldehyde 3-phosphate. This Haloferax volcanii (strain ATCC 29605 / DSM 3757 / JCM 8879 / NBRC 14742 / NCIMB 2012 / VKM B-1768 / DS2) (Halobacterium volcanii) protein is Tryptophan synthase alpha chain.